A 560-amino-acid chain; its full sequence is DNA-directed primase/polymerase protein (560 aa).

Residues 1–22 (MNRKWEAKLKQIEERASHYERK) are a coiled coil. Residues Arg76, 114-116 (DLE), and 165-169 (KFSRH) each bind substrate. Asp114 and Glu116 together coordinate Mn(2+). A disordered region spans residues 203–223 (EDDDSAPETTGHGFPHFSEAP). Ser255 is subject to Phosphoserine. Substrate-binding positions include 288 to 291 (RNFR) and Lys297. Cys419, His426, Cys446, and Cys451 together coordinate Zn(2+). Positions 419–452 (CENIGRAHKSNNIMILVDLKNEVWYQKCHDPVCK) match the Zinc knuckle motif motif. Positions 480-507 (TTDEADETRSNETQNPHKPSPSRLSTGA) are disordered. Positions 481–560 (TDEADETRSN…DELIIEVLQE (80 aa)) are interaction with RPA1. A compositionally biased stretch (polar residues) spans 490–507 (NETQNPHKPSPSRLSTGA). 2 consecutive short sequence motifs (RPA1-binding motif) follow at residues 513 to 527 (WDNG…EATE) and 548 to 556 (EIPDELIIE).

It belongs to the eukaryotic-type primase small subunit family. In terms of assembly, interacts with RPA1; leading to recruitment to chromatin and stimulate DNA primase activity. Interacts with SSBP1. Interacts with POLDIP2; leading to enhance DNA polymerase activity. Mn(2+) is required as a cofactor.

It is found in the nucleus. Its subcellular location is the mitochondrion matrix. It localises to the chromosome. The enzyme catalyses ssDNA + n NTP = ssDNA/pppN(pN)n-1 hybrid + (n-1) diphosphate.. It carries out the reaction DNA(n) + a 2'-deoxyribonucleoside 5'-triphosphate = DNA(n+1) + diphosphate. Functionally, DNA primase and DNA polymerase required to tolerate replication-stalling lesions by bypassing them. Required to facilitate mitochondrial and nuclear replication fork progression by initiating de novo DNA synthesis using dNTPs and acting as an error-prone DNA polymerase able to bypass certain DNA lesions. Shows a high capacity to tolerate DNA damage lesions such as 8oxoG and abasic sites in DNA. Provides different translesion synthesis alternatives when DNA replication is stalled: able to synthesize DNA primers downstream of lesions, such as ultraviolet (UV) lesions, R-loops and G-quadruplexes, to allow DNA replication to continue. Can also realign primers ahead of 'unreadable lesions' such as abasic sites and 6-4 photoproduct (6-4 pyrimidine-pyrimidinone), thereby skipping the lesion. Repriming avoids fork degradation while leading to accumulation of internal ssDNA gaps behind the forks. Also able to incorporate nucleotides opposite DNA lesions such as 8oxoG, like a regular translesion synthesis DNA polymerase. Also required for reinitiating stalled forks after UV damage during nuclear DNA replication. Required for mitochondrial DNA (mtDNA) synthesis and replication, by reinitiating synthesis after UV damage or in the presence of chain-terminating nucleotides. Prevents APOBEC family-mediated DNA mutagenesis by repriming downstream of abasic site to prohibit error-prone translesion synthesis. Has non-overlapping function with POLH. In addition to its role in DNA damage response, also required to maintain efficient nuclear and mitochondrial DNA replication in unperturbed cells. The sequence is that of DNA-directed primase/polymerase protein from Homo sapiens (Human).